The following is a 356-amino-acid chain: S-adenosylmethionine:tRNA ribosyltransferase-isomerase (356 aa).

Belongs to the QueA family. Monomer.

The protein localises to the cytoplasm. It carries out the reaction 7-aminomethyl-7-carbaguanosine(34) in tRNA + S-adenosyl-L-methionine = epoxyqueuosine(34) in tRNA + adenine + L-methionine + 2 H(+). It participates in tRNA modification; tRNA-queuosine biosynthesis. Functionally, transfers and isomerizes the ribose moiety from AdoMet to the 7-aminomethyl group of 7-deazaguanine (preQ1-tRNA) to give epoxyqueuosine (oQ-tRNA). This Shigella dysenteriae serotype 1 (strain Sd197) protein is S-adenosylmethionine:tRNA ribosyltransferase-isomerase.